The following is a 131-amino-acid chain: Large ribosomal subunit protein bL17 (131 aa).

The protein belongs to the bacterial ribosomal protein bL17 family. As to quaternary structure, part of the 50S ribosomal subunit. Contacts protein L32.

The sequence is that of Large ribosomal subunit protein bL17 from Chromobacterium violaceum (strain ATCC 12472 / DSM 30191 / JCM 1249 / CCUG 213 / NBRC 12614 / NCIMB 9131 / NCTC 9757 / MK).